The following is a 703-amino-acid chain: Centrosomal protein of 63 kDa (703 aa).

Met-1 carries the post-translational modification N-acetylmethionine. Coiled-coil stretches lie at residues 22–199, 242–306, 353–533, and 676–703; these read EAEL…ESVE, MTVL…QHAV, LEGS…STQM, and HILE…TALK. A Phosphoserine modification is found at Ser-278.

It belongs to the CEP63 family. In terms of assembly, interacts with CEP152 and CDK1; these interactions recruit both ligands to centrosomes. Interacts with CDK2, CDK5RAP2, WDR62, CEP90, KIAA0753/moonraker and CCDC14. CEP63, CDK5RAP2, CEP152, WDR62 are proposed to form a stepwise assembled complex at the centrosome forming a ring near parental centrioles. Interacts with CCDC57; the interaction is required for their location to proximal end of centrioles. Interacts with FXR1; promoting its stabilization. (Microbial infection) Interacts with zika virus serine protease NS3; this interaction disorganizes the centrosome. Post-translationally, polyubiquitinated via 'Lys-48'-linked ubiquitin, leading to its degradation. Deubiquitinated by USP36, promoting its stabilization.

It is found in the cytoplasm. Its subcellular location is the cytoskeleton. The protein localises to the microtubule organizing center. It localises to the centrosome. The protein resides in the centriole. It is found in the centriolar satellite. In terms of biological role, required for normal spindle assembly. Plays a key role in mother-centriole-dependent centriole duplication; the function seems also to involve CEP152, CDK5RAP2 and WDR62 through a stepwise assembled complex at the centrosome that recruits CDK2 required for centriole duplication. Reported to be required for centrosomal recruitment of CEP152; however, this function has been questioned. Also recruits CDK1 to centrosomes. Plays a role in DNA damage response. Following DNA damage, such as double-strand breaks (DSBs), is removed from centrosomes; this leads to the inactivation of spindle assembly and delay in mitotic progression. Promotes stabilization of FXR1 protein by inhibiting FXR1 ubiquitination. In Homo sapiens (Human), this protein is Centrosomal protein of 63 kDa.